The chain runs to 483 residues: Probable 4-hydroxyphenylacetate 3-monooxygenase (483 aa).

Substrate is bound by residues 104-108 (RSPDY) and histidine 150. FAD is bound by residues 150 to 152 (HTF), 156 to 159 (QVNR), and threonine 193. 206 to 207 (AP) lines the substrate pocket. Position 452–455 (452–455 (DPIR)) interacts with FAD.

This sequence belongs to the FADH(2)-utilizing monooxygenase family.

It catalyses the reaction 4-hydroxyphenylacetate + FADH2 + O2 = 3,4-dihydroxyphenylacetate + FAD + H2O + H(+). It functions in the pathway aromatic compound metabolism; 4-hydroxyphenylacetate degradation; pyruvate and succinate semialdehyde from 4-hydroxyphenylacetate: step 1/7. Functionally, catalyzes the hydroxylation of 4-hydroxyphenylacetic acid (4HPA), leading to the production of 3,4-dihydroxyphenylacetic acid (DHPA). The chain is Probable 4-hydroxyphenylacetate 3-monooxygenase (yoaI) from Bacillus subtilis (strain 168).